The chain runs to 228 residues: Large ribosomal subunit protein uL23m (228 aa).

Residues 194–228 (PEEEGWSEVEENLPLDESAESAAEESSSKGSETRQ) are disordered. The span at 195–216 (EEEGWSEVEENLPLDESAESAA) shows a compositional bias: acidic residues.

It belongs to the universal ribosomal protein uL23 family. Component of the mitochondrial large ribosomal subunit (mt-LSU). Mature N.crassa 74S mitochondrial ribosomes consist of a small (37S) and a large (54S) subunit. The 37S small subunit contains a 16S ribosomal RNA (16S mt-rRNA) and 32 different proteins. The 54S large subunit contains a 23S rRNA (23S mt-rRNA) and 42 different proteins. uL23m forms the wall of the exit tunnel.

The protein localises to the mitochondrion. Its function is as follows. Component of the mitochondrial ribosome (mitoribosome), a dedicated translation machinery responsible for the synthesis of mitochondrial genome-encoded proteins, including at least some of the essential transmembrane subunits of the mitochondrial respiratory chain. The mitoribosomes are attached to the mitochondrial inner membrane and translation products are cotranslationally integrated into the membrane. The chain is Large ribosomal subunit protein uL23m (mrp20) from Neurospora crassa (strain ATCC 24698 / 74-OR23-1A / CBS 708.71 / DSM 1257 / FGSC 987).